A 548-amino-acid polypeptide reads, in one-letter code: Pentatricopeptide repeat-containing protein At5g15300 (548 aa).

11 PPR repeats span residues 76–110 (DVSICNHVLRGSAQSMKPEKTVSLYTEMEKRGVSP), 111–145 (DRYTFTFVLKACSKLEWRSNGFAFHGKVVRHGFVL), 146–176 (NEYVKNALILFHANCGDLGIASELFDDSAKA), 177–211 (HKVAWSSMTSGYAKRGKIDEAMRLFDEMPYKDQVA), 212–238 (WNVMITGCLKCKEMDSARELFDRFTEK), 239–273 (DVVTWNAMISGYVNCGYPKEALGIFKEMRDAGEHP), 274–308 (DVVTILSLLSACAVLGDLETGKRLHIYILETASVS), 314–348 (GTPIWNALIDMYAKCGSIDRAIEVFRGVKDRDLST), 349–378 (WNTLIVGLALHHAEGSIEMFEEMQRLKVWP), 379–409 (NEVTFIGVILACSHSGRVDEGRKYFSLMRDM), and 415–445 (NIKHYGCMVDMLGRAGQLEEAFMFVESMKIE). The segment at 450–525 (VWRTLLGACK…PTGVSLIEED (76 aa)) is type E motif.

Belongs to the PPR family. PCMP-E subfamily.

The sequence is that of Pentatricopeptide repeat-containing protein At5g15300 (PCMP-E40) from Arabidopsis thaliana (Mouse-ear cress).